The following is a 340-amino-acid chain: Methionine import ATP-binding protein MetN (340 aa).

The ABC transporter domain maps to 2-241; that stretch reads IRIENLTKIY…PQSSVAKEFI (240 aa). 38 to 45 serves as a coordination point for ATP; sequence GLSGAGKS.

This sequence belongs to the ABC transporter superfamily. Methionine importer (TC 3.A.1.24) family. The complex is composed of two ATP-binding proteins (MetN), two transmembrane proteins (MetI) and a solute-binding protein (MetQ).

The protein resides in the cell membrane. The enzyme catalyses L-methionine(out) + ATP + H2O = L-methionine(in) + ADP + phosphate + H(+). It carries out the reaction D-methionine(out) + ATP + H2O = D-methionine(in) + ADP + phosphate + H(+). In terms of biological role, part of the ABC transporter complex MetNIQ involved in methionine import. Responsible for energy coupling to the transport system. This is Methionine import ATP-binding protein MetN from Desulfitobacterium hafniense (strain Y51).